Here is a 215-residue protein sequence, read N- to C-terminus: Cytidylate kinase (215 aa).

10 to 18 is a binding site for ATP; the sequence is GPAASGKGT.

The protein belongs to the cytidylate kinase family. Type 1 subfamily.

The protein resides in the cytoplasm. It catalyses the reaction CMP + ATP = CDP + ADP. The enzyme catalyses dCMP + ATP = dCDP + ADP. This chain is Cytidylate kinase, found in Bartonella bacilliformis (strain ATCC 35685 / KC583 / Herrer 020/F12,63).